We begin with the raw amino-acid sequence, 166 residues long: Biotin carboxyl carrier protein of acetyl-CoA carboxylase (166 aa).

The span at 61-70 shows a compositional bias: polar residues; the sequence is STASEASSPA. The tract at residues 61 to 82 is disordered; it reads STASEASSPASVKDVPVEEQPQ. In terms of domain architecture, Biotinyl-binding spans 90 to 166; it reads GDIVESPLVG…EFGQGLVRIK (77 aa). Lys132 is subject to N6-biotinyllysine.

In terms of assembly, homodimer.

It functions in the pathway lipid metabolism; fatty acid biosynthesis. This protein is a component of the acetyl coenzyme A carboxylase complex; first, biotin carboxylase catalyzes the carboxylation of the carrier protein and then the transcarboxylase transfers the carboxyl group to form malonyl-CoA. This Streptococcus pyogenes serotype M6 (strain ATCC BAA-946 / MGAS10394) protein is Biotin carboxyl carrier protein of acetyl-CoA carboxylase.